A 426-amino-acid chain; its full sequence is Testicular acid phosphatase (426 aa).

An N-terminal signal peptide occupies residues 1–26 (MAGLGFWGHPAGPLLLLLLLVLPPRA). The Extracellular portion of the chain corresponds to 27–393 (LPEGPLVFVA…AAIPPAPVVP (367 aa)). Residue H41 is the Nucleophile of the active site. 3 disulfides stabilise this stretch: C159–C378, C214–C312, and C353–C357. 2 N-linked (GlcNAc...) asparagine glycosylation sites follow: N191 and N269. D289 (proton donor) is an active-site residue. 2 N-linked (GlcNAc...) asparagine glycosylation sites follow: N330 and N339. Residues 394-414 (LLAGAVAVLVALSLGLGLLAW) form a helical membrane-spanning segment. At 415-426 (RPGCLRALGGPV) the chain is on the cytoplasmic side.

Belongs to the histidine acid phosphatase family. As to quaternary structure, homodimer. Glycosylated. As to expression, expressed mainly in the testis. Also expressed in the brain where they are enriched at the postsynaptic sites. Expressed at lower levels in the trachea, prostate, bone marrow, spinal cord, colon, fetal brain, heart, thymus, fetal liver, spleen, leukocytes, ovary, small intestine, pancreas and skeletal muscle. Expression is significantly lower in testicular cancer tissues than in normal testicular tissues. Isoform 3 is expressed in the testis, trachea, prostate and bone marrow.

Its subcellular location is the membrane. The catalysed reaction is a phosphate monoester + H2O = an alcohol + phosphate. Its function is as follows. May dephosphorylate receptor tyrosine-protein kinase ERBB4 and inhibits its ligand-induced proteolytic cleavage. May play a role in odontogenesis. In Homo sapiens (Human), this protein is Testicular acid phosphatase.